The chain runs to 234 residues: Uridylate kinase (234 aa).

An ATP-binding site is contributed by 10–11 (GS). A UMP-binding site is contributed by G44. 2 residues coordinate ATP: G45 and R49. UMP-binding positions include D66 and 114–120 (ITPAQTT). T140, Y146, and D149 together coordinate ATP.

The protein belongs to the UMP kinase family. In terms of assembly, homohexamer.

The protein resides in the cytoplasm. The catalysed reaction is UMP + ATP = UDP + ADP. It participates in pyrimidine metabolism; CTP biosynthesis via de novo pathway; UDP from UMP (UMPK route): step 1/1. With respect to regulation, inhibited by UTP. Functionally, catalyzes the reversible phosphorylation of UMP to UDP. In Methanoculleus marisnigri (strain ATCC 35101 / DSM 1498 / JR1), this protein is Uridylate kinase.